The following is a 532-amino-acid chain: Protein kinase domain-containing protein ppk9 (532 aa).

In terms of domain architecture, Protein kinase spans 23 to 274 (WLLGRTLGQG…VAEIMQHPWF (252 aa)). ATP contacts are provided by residues 29 to 37 (LGQGNLAKV) and Lys52. Asp145 serves as the catalytic Proton acceptor. Polar residues predominate over residues 316-346 (PSSSVGQIPQPTDHSALSPSKPMSISGTESP). The disordered stretch occupies residues 316–349 (PSSSVGQIPQPTDHSALSPSKPMSISGTESPNPD).

Its subcellular location is the cytoplasm. It is found in the nucleus. It localises to the cytoskeleton. The protein resides in the microtubule organizing center. The protein localises to the spindle pole body. This Schizosaccharomyces pombe (strain 972 / ATCC 24843) (Fission yeast) protein is Protein kinase domain-containing protein ppk9 (ppk9).